We begin with the raw amino-acid sequence, 390 residues long: MIRGRAPRTRPSPPPPLLPLLSLSLLLLSPTVRGDCGPPPDIPNARPILGRHSKFAEQSKVAYSCNNGFKQVPDKSNIVVCLENGQWSSHETFCEKSCVAPERLSFASLKKEYLNMNFFPVGTIVEYECRPGFRKQPPLPGKATCLEDLVWSPVAQFCKKKSCPNPKDLDNGHINIPTGILFGSEINFSCNPGYRLVGVSSTFCSVTGNTVDWDDEFPVCTEIHCPEPPKINNGIMRGESDSYTYSQVVTYSCDKGFILVGNASIYCTVSKSDVGQWSSPPPRCIEKSKVPTKKPTINVPSTGTPSTPQKPTTESVPNPGDQPTPQKPSTVKVSATQHVPVTKTTVRHPIRTSTDKGEPNTGGDRYIYGHTCLITLTVLHVMLSLIGYLT.

Residues 1 to 34 form the signal peptide; it reads MIRGRAPRTRPSPPPPLLPLLSLSLLLLSPTVRG. Sushi domains lie at 35–96, 97–160, 161–222, and 223–286; these read DCGP…FCEK, SCVA…FCKK, KSCP…VCTE, and IHCP…RCIE. 8 cysteine pairs are disulfide-bonded: Cys36–Cys81, Cys65–Cys94, Cys98–Cys145, Cys129–Cys158, Cys163–Cys204, Cys190–Cys220, Cys225–Cys267, and Cys253–Cys284. Asn187 is a glycosylation site (N-linked (GlcNAc...) asparagine). An N-linked (GlcNAc...) asparagine glycan is attached at Asn262. The tract at residues 273–362 is disordered; that stretch reads DVGQWSSPPP…STDKGEPNTG (90 aa). Polar residues-rich tracts occupy residues 298–319 and 327–344; these read NVPS…VPNP and KPST…VTKT. A lipid anchor (GPI-anchor amidated glycine) is attached at Gly362. Residues 363–390 constitute a propeptide, removed in mature form; that stretch reads GDRYIYGHTCLITLTVLHVMLSLIGYLT.

Belongs to the receptors of complement activation (RCA) family. In terms of tissue distribution, brain, secretory epithelia, skeletal muscle, liver, testes, thymus, spleen and lymph node.

The protein resides in the cell membrane. This protein recognizes C4b and C3b fragments that condense with cell-surface hydroxyl or amino groups when nascent C4b and C3b are locally generated during C4 and c3 activation. Interaction of daf with cell-associated C4b and C3b polypeptides interferes with their ability to catalyze the conversion of C2 and factor B to enzymatically active C2a and Bb and thereby prevents the formation of C4b2a and C3bBb, the amplification convertases of the complement cascade. Inhibits complement activation by destabilizing and preventing the formation of C3 and C5 convertases, which prevents complement damage. The polypeptide is Complement decay-accelerating factor, GPI-anchored (Cd55) (Mus musculus (Mouse)).